Reading from the N-terminus, the 239-residue chain is Ribonuclease P protein component 3 (239 aa).

It belongs to the eukaryotic/archaeal RNase P protein component 3 family. Consists of a catalytic RNA component and at least 4-5 protein subunits.

Its subcellular location is the cytoplasm. It carries out the reaction Endonucleolytic cleavage of RNA, removing 5'-extranucleotides from tRNA precursor.. Its function is as follows. Part of ribonuclease P, a protein complex that generates mature tRNA molecules by cleaving their 5'-ends. The protein is Ribonuclease P protein component 3 of Methanosarcina mazei (strain ATCC BAA-159 / DSM 3647 / Goe1 / Go1 / JCM 11833 / OCM 88) (Methanosarcina frisia).